The primary structure comprises 471 residues: Argininosuccinate lyase (471 aa).

The protein belongs to the lyase 1 family. Argininosuccinate lyase subfamily.

It localises to the cytoplasm. The catalysed reaction is 2-(N(omega)-L-arginino)succinate = fumarate + L-arginine. The protein operates within amino-acid biosynthesis; L-arginine biosynthesis; L-arginine from L-ornithine and carbamoyl phosphate: step 3/3. This is Argininosuccinate lyase from Paramagnetospirillum magneticum (strain ATCC 700264 / AMB-1) (Magnetospirillum magneticum).